A 441-amino-acid polypeptide reads, in one-letter code: tRNA modification GTPase MnmE (441 aa).

The (6S)-5-formyl-5,6,7,8-tetrahydrofolate site is built by Arg-22, Glu-80, and Lys-118. Residues 213-366 (GIYIAIVGEP…LLNLIKQRVE (154 aa)) enclose the TrmE-type G domain. GTP contacts are provided by residues 223-228 (NSGKST), 242-248 (SEYAGTT), and 267-270 (DTAG). Ser-227 and Thr-248 together coordinate Mg(2+). Position 441 (Lys-441) interacts with (6S)-5-formyl-5,6,7,8-tetrahydrofolate.

The protein belongs to the TRAFAC class TrmE-Era-EngA-EngB-Septin-like GTPase superfamily. TrmE GTPase family. Homodimer. Heterotetramer of two MnmE and two MnmG subunits. Requires K(+) as cofactor.

It is found in the cytoplasm. In terms of biological role, exhibits a very high intrinsic GTPase hydrolysis rate. Involved in the addition of a carboxymethylaminomethyl (cmnm) group at the wobble position (U34) of certain tRNAs, forming tRNA-cmnm(5)s(2)U34. In Ehrlichia canis (strain Jake), this protein is tRNA modification GTPase MnmE.